The following is a 391-amino-acid chain: Phosphopentomutase (391 aa).

Positions 12, 285, 290, 326, 327, and 338 each coordinate Mn(2+).

It belongs to the phosphopentomutase family. It depends on Mn(2+) as a cofactor.

It localises to the cytoplasm. It catalyses the reaction 2-deoxy-alpha-D-ribose 1-phosphate = 2-deoxy-D-ribose 5-phosphate. It carries out the reaction alpha-D-ribose 1-phosphate = D-ribose 5-phosphate. Its pathway is carbohydrate degradation; 2-deoxy-D-ribose 1-phosphate degradation; D-glyceraldehyde 3-phosphate and acetaldehyde from 2-deoxy-alpha-D-ribose 1-phosphate: step 1/2. Its function is as follows. Isomerase that catalyzes the conversion of deoxy-ribose 1-phosphate (dRib-1-P) and ribose 1-phosphate (Rib-1-P) to deoxy-ribose 5-phosphate (dRib-5-P) and ribose 5-phosphate (Rib-5-P), respectively. This Herpetosiphon aurantiacus (strain ATCC 23779 / DSM 785 / 114-95) protein is Phosphopentomutase.